The following is a 123-amino-acid chain: Large ribosomal subunit protein bL12 (123 aa).

Belongs to the bacterial ribosomal protein bL12 family. As to quaternary structure, homodimer. Part of the ribosomal stalk of the 50S ribosomal subunit. Forms a multimeric L10(L12)X complex, where L10 forms an elongated spine to which 2 to 4 L12 dimers bind in a sequential fashion. Binds GTP-bound translation factors.

In terms of biological role, forms part of the ribosomal stalk which helps the ribosome interact with GTP-bound translation factors. Is thus essential for accurate translation. The chain is Large ribosomal subunit protein bL12 from Parvibaculum lavamentivorans (strain DS-1 / DSM 13023 / NCIMB 13966).